Reading from the N-terminus, the 49-residue chain is Large ribosomal subunit protein bL33B (49 aa).

The protein belongs to the bacterial ribosomal protein bL33 family.

This is Large ribosomal subunit protein bL33B from Exiguobacterium sibiricum (strain DSM 17290 / CCUG 55495 / CIP 109462 / JCM 13490 / 255-15).